The primary structure comprises 243 residues: 3-deoxy-manno-octulosonate cytidylyltransferase (243 aa).

It belongs to the KdsB family.

The protein localises to the cytoplasm. It carries out the reaction 3-deoxy-alpha-D-manno-oct-2-ulosonate + CTP = CMP-3-deoxy-beta-D-manno-octulosonate + diphosphate. It participates in nucleotide-sugar biosynthesis; CMP-3-deoxy-D-manno-octulosonate biosynthesis; CMP-3-deoxy-D-manno-octulosonate from 3-deoxy-D-manno-octulosonate and CTP: step 1/1. Its pathway is bacterial outer membrane biogenesis; lipopolysaccharide biosynthesis. In terms of biological role, activates KDO (a required 8-carbon sugar) for incorporation into bacterial lipopolysaccharide in Gram-negative bacteria. This Bartonella tribocorum (strain CIP 105476 / IBS 506) protein is 3-deoxy-manno-octulosonate cytidylyltransferase.